The sequence spans 431 residues: Adenylosuccinate synthetase (431 aa).

Residues 13–19 (GDEGKGK) and 41–43 (GHT) each bind GTP. Aspartate 14 functions as the Proton acceptor in the catalytic mechanism. Residues aspartate 14 and glycine 41 each coordinate Mg(2+). IMP-binding positions include 14–17 (DEGK), 39–42 (NAGH), threonine 130, arginine 144, glutamine 225, threonine 240, and arginine 304. Histidine 42 acts as the Proton donor in catalysis. Residue 300-306 (ATTGRKR) participates in substrate binding. GTP is bound by residues arginine 306, 332-334 (KLD), and 415-417 (STG).

It belongs to the adenylosuccinate synthetase family. As to quaternary structure, homodimer. Requires Mg(2+) as cofactor.

Its subcellular location is the cytoplasm. It carries out the reaction IMP + L-aspartate + GTP = N(6)-(1,2-dicarboxyethyl)-AMP + GDP + phosphate + 2 H(+). The protein operates within purine metabolism; AMP biosynthesis via de novo pathway; AMP from IMP: step 1/2. Plays an important role in the de novo pathway of purine nucleotide biosynthesis. Catalyzes the first committed step in the biosynthesis of AMP from IMP. In Shewanella oneidensis (strain ATCC 700550 / JCM 31522 / CIP 106686 / LMG 19005 / NCIMB 14063 / MR-1), this protein is Adenylosuccinate synthetase.